A 150-amino-acid polypeptide reads, in one-letter code: Large ribosomal subunit protein uL11 (150 aa).

The protein belongs to the universal ribosomal protein uL11 family. As to quaternary structure, part of the ribosomal stalk of the 50S ribosomal subunit. Interacts with L10 and the large rRNA to form the base of the stalk. L10 forms an elongated spine to which L12 dimers bind in a sequential fashion forming a multimeric L10(L12)X complex. Post-translationally, one or more lysine residues are methylated.

Its function is as follows. Forms part of the ribosomal stalk which helps the ribosome interact with GTP-bound translation factors. The protein is Large ribosomal subunit protein uL11 of Jannaschia sp. (strain CCS1).